The sequence spans 201 residues: Translation initiation factor IF-3 (201 aa).

A disordered region spans residues 170–201; the sequence is TPKSASKKGHTPPKTQVEASKQANESAETEEE. The segment covering 182 to 195 has biased composition (polar residues); that stretch reads PKTQVEASKQANES.

It belongs to the IF-3 family. Monomer.

It localises to the cytoplasm. Functionally, IF-3 binds to the 30S ribosomal subunit and shifts the equilibrium between 70S ribosomes and their 50S and 30S subunits in favor of the free subunits, thus enhancing the availability of 30S subunits on which protein synthesis initiation begins. This is Translation initiation factor IF-3 from Porphyromonas gingivalis (strain ATCC BAA-308 / W83).